The following is a 340-amino-acid chain: Glycerol-3-phosphate dehydrogenase [NAD(P)+] (340 aa).

The NADPH site is built by Ser-13, Tyr-14, and Lys-108. Sn-glycerol 3-phosphate contacts are provided by Lys-108, Gly-137, and Thr-139. Ala-141 provides a ligand contact to NADPH. Lys-193, Asp-246, Ser-256, Arg-257, and Asn-258 together coordinate sn-glycerol 3-phosphate. The active-site Proton acceptor is Lys-193. Residue Arg-257 participates in NADPH binding. NADPH contacts are provided by Ile-281 and Glu-283.

This sequence belongs to the NAD-dependent glycerol-3-phosphate dehydrogenase family.

The protein resides in the cytoplasm. It catalyses the reaction sn-glycerol 3-phosphate + NAD(+) = dihydroxyacetone phosphate + NADH + H(+). The catalysed reaction is sn-glycerol 3-phosphate + NADP(+) = dihydroxyacetone phosphate + NADPH + H(+). It participates in membrane lipid metabolism; glycerophospholipid metabolism. Its function is as follows. Catalyzes the reduction of the glycolytic intermediate dihydroxyacetone phosphate (DHAP) to sn-glycerol 3-phosphate (G3P), the key precursor for phospholipid synthesis. The polypeptide is Glycerol-3-phosphate dehydrogenase [NAD(P)+] (Bartonella quintana (strain Toulouse) (Rochalimaea quintana)).